The primary structure comprises 84 residues: Large ribosomal subunit protein bL27 (84 aa).

A disordered region spans residues 1-21 (MATKKAGGSSRNGRDSAGRRL).

The protein belongs to the bacterial ribosomal protein bL27 family.

This is Large ribosomal subunit protein bL27 from Pelagibacter ubique (strain HTCC1062).